The sequence spans 87 residues: Pyocin-S2 immunity protein (87 aa).

The protein belongs to the colicins ColE2/ColE8/ColE9 and pyocins S1/S2 family.

The protein is Pyocin-S2 immunity protein (imm2) of Pseudomonas aeruginosa (strain ATCC 15692 / DSM 22644 / CIP 104116 / JCM 14847 / LMG 12228 / 1C / PRS 101 / PAO1).